A 366-amino-acid polypeptide reads, in one-letter code: DNA replication and repair protein RecF (366 aa).

30-37 serves as a coordination point for ATP; it reads GRNAQGKT.

Belongs to the RecF family.

Its subcellular location is the cytoplasm. In terms of biological role, the RecF protein is involved in DNA metabolism; it is required for DNA replication and normal SOS inducibility. RecF binds preferentially to single-stranded, linear DNA. It also seems to bind ATP. The chain is DNA replication and repair protein RecF from Streptococcus thermophilus (strain CNRZ 1066).